The primary structure comprises 689 residues: SH3 domain-binding protein 1 (689 aa).

The segment covering 1-11 (MMKRQLHRMRQ) has biased composition (basic residues). The interval 1-24 (MMKRQLHRMRQLAHTGSSGRTPET) is disordered. Residues 1–275 (MMKRQLHRMR…TAAPFSRVYG (275 aa)) form an interaction with CGNL1 region. The region spanning 17–262 (SSGRTPETAE…RDNHSQADSS (246 aa)) is the BAR domain. Residues Ser-241 and Ser-262 each carry the phosphoserine modification. The Rho-GAP domain occupies 276–469 (VSLRTHLQDL…VLIQNADTLF (194 aa)). Residues 470–689 (PGDINFSVSG…RPRGLISETD (220 aa)) form an interaction with CD2AP region. The disordered stretch occupies residues 507 to 689 (TAATPTPTPA…RPRGLISETD (183 aa)). Phosphoserine occurs at positions 539 and 545. Positions 565 to 575 (PARPTMPPPQP) are enriched in pro residues. Residues 576-594 (SSSRSSPPALSLPAGSVSP) are compositionally biased toward low complexity. Ser-586 bears the Phosphoserine mark. Residue Thr-596 is modified to Phosphothreonine. An SH3-binding motif is present at residues 611–620 (APTVPPPLPP). The segment covering 613–625 (TVPPPLPPAPPQP) has biased composition (pro residues). At Ser-641 the chain carries Phosphoserine. Positions 670–680 (PPTPVLPPQPR) are enriched in pro residues.

In terms of assembly, interacts with RAC1. Interacts with the exocyst via EXOC4 and EXOC8; required for the localization of both SH3BP1 and the exocyst to the leading edge of migrating cells. Interacts with CD2AP and CGNL1; probably part of a complex at cell junctions. Interacts with CAPZA1; recruits CAPZA1 to forming cell junctions. May interact with AFDN. Interacts with PLXND1; they dissociate upon SEMA3E binding to PLXND1 allowing SH3BP1 to transduce downstream signal through RAC1 inactivation. Interacts with ABL1, GRB2 and SRC (via SH3 domain).

It is found in the cell projection. It localises to the cell junction. Its subcellular location is the tight junction. The protein resides in the adherens junction. The protein localises to the phagocytic cup. It is found in the nucleus. It localises to the cytoplasm. Its subcellular location is the cytosol. Its function is as follows. GTPase activating protein/GAP which specifically converts GTP-bound Rho-type GTPases including RAC1 and CDC42 in their inactive GDP-bound form. By specifically inactivating RAC1 at the leading edge of migrating cells, it regulates the spatiotemporal organization of cell protrusions which is important for proper cell migration. Also negatively regulates CDC42 in the process of actin remodeling and the formation of epithelial cell junctions. Through its GAP activity toward RAC1 and/or CDC42 plays a specific role in phagocytosis of large particles. Specifically recruited by a PI3 kinase/PI3K-dependent mechanism to sites of large particles engagement, inactivates RAC1 and/or CDC42 allowing the reorganization of the underlying actin cytoskeleton required for engulfment. It also plays a role in angiogenesis and the process of repulsive guidance as part of a semaphorin-plexin signaling pathway. Following the binding of PLXND1 to extracellular SEMA3E it dissociates from PLXND1 and inactivates RAC1, inducing the intracellular reorganization of the actin cytoskeleton and the collapse of cells. This chain is SH3 domain-binding protein 1, found in Rattus norvegicus (Rat).